The sequence spans 248 residues: Type II restriction enzyme XhoI (248 aa).

Belongs to the XhoI type II restriction endonuclease family.

It carries out the reaction Endonucleolytic cleavage of DNA to give specific double-stranded fragments with terminal 5'-phosphates.. In terms of biological role, a P subtype restriction enzyme that recognizes the double-stranded sequence 5'-CTCGAG-3' and cleaves after C-1. The protein is Type II restriction enzyme XhoI of Xanthomonas vasicola.